Reading from the N-terminus, the 310-residue chain is Probable GTP 3',8-cyclase (310 aa).

In terms of domain architecture, Radical SAM core spans Lys5–Arg218. Arg14 lines the GTP pocket. 3 residues coordinate [4Fe-4S] cluster: Cys21, Cys25, and Cys28. Lys62 contacts GTP. Residue Gly66 participates in S-adenosyl-L-methionine binding. Thr91 contributes to the GTP binding site. Residue Ser115 participates in S-adenosyl-L-methionine binding. Lys153 lines the GTP pocket. [4Fe-4S] cluster-binding residues include Cys251, Cys254, and Cys268.

It belongs to the radical SAM superfamily. MoaA family. [4Fe-4S] cluster serves as cofactor.

It carries out the reaction GTP + AH2 + S-adenosyl-L-methionine = (8S)-3',8-cyclo-7,8-dihydroguanosine 5'-triphosphate + 5'-deoxyadenosine + L-methionine + A + H(+). It participates in cofactor biosynthesis; molybdopterin biosynthesis. Its function is as follows. Catalyzes the cyclization of GTP to (8S)-3',8-cyclo-7,8-dihydroguanosine 5'-triphosphate. The protein is Probable GTP 3',8-cyclase of Pyrobaculum aerophilum (strain ATCC 51768 / DSM 7523 / JCM 9630 / CIP 104966 / NBRC 100827 / IM2).